Here is a 98-residue protein sequence, read N- to C-terminus: Small ribosomal subunit protein bS6c (98 aa).

Belongs to the bacterial ribosomal protein bS6 family.

It localises to the plastid. The protein resides in the chloroplast. Binds together with bS18 to 16S ribosomal RNA. This Phaeodactylum tricornutum (strain CCAP 1055/1) protein is Small ribosomal subunit protein bS6c.